The chain runs to 176 residues: NAD(P)H-quinone oxidoreductase subunit 6, chloroplastic (176 aa).

5 consecutive transmembrane segments (helical) span residues 10–30, 32–52, 60–80, 107–127, and 152–172; these read FLLV…VLLT, PIFS…FHIP, AAQL…AVMF, IFVS…IWTT, and FFLP…GAIA.

The protein belongs to the complex I subunit 6 family. NDH is composed of at least 16 different subunits, 5 of which are encoded in the nucleus.

The protein resides in the plastid. It localises to the chloroplast thylakoid membrane. The catalysed reaction is a plastoquinone + NADH + (n+1) H(+)(in) = a plastoquinol + NAD(+) + n H(+)(out). The enzyme catalyses a plastoquinone + NADPH + (n+1) H(+)(in) = a plastoquinol + NADP(+) + n H(+)(out). NDH shuttles electrons from NAD(P)H:plastoquinone, via FMN and iron-sulfur (Fe-S) centers, to quinones in the photosynthetic chain and possibly in a chloroplast respiratory chain. The immediate electron acceptor for the enzyme in this species is believed to be plastoquinone. Couples the redox reaction to proton translocation, and thus conserves the redox energy in a proton gradient. In Buxus microphylla (Littleleaf boxwood), this protein is NAD(P)H-quinone oxidoreductase subunit 6, chloroplastic (ndhG).